The chain runs to 238 residues: ATP synthase subunit a (238 aa).

5 helical membrane-spanning segments follow: residues 15 to 35, 76 to 96, 111 to 131, 167 to 187, and 208 to 230; these read IFNL…FVFI, YSLF…LGLM, PTAN…LTHI, LALR…LLLL, and AFSV…VYLG.

This sequence belongs to the ATPase A chain family. As to quaternary structure, F-type ATPases have 2 components, CF(1) - the catalytic core - and CF(0) - the membrane proton channel. CF(1) has five subunits: alpha(3), beta(3), gamma(1), delta(1), epsilon(1). CF(0) has three main subunits: a(1), b(2) and c(9-12). The alpha and beta chains form an alternating ring which encloses part of the gamma chain. CF(1) is attached to CF(0) by a central stalk formed by the gamma and epsilon chains, while a peripheral stalk is formed by the delta and b chains.

It localises to the cell membrane. Key component of the proton channel; it plays a direct role in the translocation of protons across the membrane. The chain is ATP synthase subunit a from Streptococcus pneumoniae (strain ATCC BAA-255 / R6).